Consider the following 303-residue polypeptide: Succinate--CoA ligase [ADP-forming] subunit alpha (303 aa).

CoA contacts are provided by residues 20–23 (TGSE), lysine 46, and 108–110 (ITE). Position 173 (tyrosine 173) interacts with substrate. Histidine 259 serves as the catalytic Tele-phosphohistidine intermediate.

This sequence belongs to the succinate/malate CoA ligase alpha subunit family. As to quaternary structure, heterotetramer of two alpha and two beta subunits.

The catalysed reaction is succinate + ATP + CoA = succinyl-CoA + ADP + phosphate. It carries out the reaction GTP + succinate + CoA = succinyl-CoA + GDP + phosphate. It participates in carbohydrate metabolism; tricarboxylic acid cycle; succinate from succinyl-CoA (ligase route): step 1/1. Its function is as follows. Succinyl-CoA synthetase functions in the citric acid cycle (TCA), coupling the hydrolysis of succinyl-CoA to the synthesis of either ATP or GTP and thus represents the only step of substrate-level phosphorylation in the TCA. The alpha subunit of the enzyme binds the substrates coenzyme A and phosphate, while succinate binding and nucleotide specificity is provided by the beta subunit. The chain is Succinate--CoA ligase [ADP-forming] subunit alpha from Mycobacterium bovis (strain ATCC BAA-935 / AF2122/97).